The primary structure comprises 130 residues: Large ribosomal subunit protein eL22 (130 aa).

Residues 1-21 (MPGKTAQKGGRPSGKGKKKKQ) are disordered. Positions 17-20 (KKKK) match the Nuclear localization signal motif.

It belongs to the eukaryotic ribosomal protein eL22 family.

The sequence is that of Large ribosomal subunit protein eL22 (RPL22) from Tripneustes gratilla (Hawaian sea urchin).